The following is a 330-amino-acid chain: Methionyl-tRNA formyltransferase (330 aa).

A (6S)-5,6,7,8-tetrahydrofolate-binding site is contributed by 116–119; that stretch reads SLLP.

It belongs to the Fmt family.

It carries out the reaction L-methionyl-tRNA(fMet) + (6R)-10-formyltetrahydrofolate = N-formyl-L-methionyl-tRNA(fMet) + (6S)-5,6,7,8-tetrahydrofolate + H(+). In terms of biological role, attaches a formyl group to the free amino group of methionyl-tRNA(fMet). The formyl group appears to play a dual role in the initiator identity of N-formylmethionyl-tRNA by promoting its recognition by IF2 and preventing the misappropriation of this tRNA by the elongation apparatus. This chain is Methionyl-tRNA formyltransferase, found in Nitratidesulfovibrio vulgaris (strain ATCC 29579 / DSM 644 / CCUG 34227 / NCIMB 8303 / VKM B-1760 / Hildenborough) (Desulfovibrio vulgaris).